A 409-amino-acid chain; its full sequence is BRCA1-A complex subunit Abraxas 1 (409 aa).

The region spanning 7–160 is the MPN domain; that stretch reads SAVLSGFVLG…HSLYKPQKGL (154 aa). Position 48 is a phosphoserine (S48). Residues 206–260 are a coiled coil; it reads DGSLKEVHKINEMYASLQEELKSICKKVEDSEQAVDKLVKDVNRLKREIEKRRGA. The span at 362-372 shows a compositional bias: basic and acidic residues; it reads LLDTQDKRSKA. Positions 362–409 are disordered; that stretch reads LLDTQDKRSKADTGSSNQDKASKMSSPETDEEIEKMKGFGEYSRSPTF. A compositionally biased stretch (polar residues) spans 373–388; it reads DTGSSNQDKASKMSSP. A phosphoserine mark is found at S386 and S387. A Phosphothreonine modification is found at T390. Phosphoserine is present on residues S404 and S406. The pSXXF motif signature appears at 406-409; it reads SPTF.

Belongs to the FAM175 family. Abraxas subfamily. As to quaternary structure, component of the ARISC complex, at least composed of UIMC1/RAP80, ABRAXAS1, BRCC3/BRCC36, BABAM2 and BABAM1/NBA1. Component of the BRCA1-A complex, at least composed of BRCA1, BARD1, UIMC1/RAP80, ABRAXAS1, BRCC3/BRCC36, BABAM2 and BABAM1/NBA1. In the complex, interacts directly with UIMC1/RAP80, BRCC3/BRCC36 and BABAM2. Interacts directly (when phosphorylated at Ser-406) with BRCA1. Homodimer. The homodimer interacts directly (when phosphorylated at Ser-404 and Ser-406) with two BRCA1 chains, giving rise to a heterotetramer. Binds polyubiquitin. Post-translationally, phosphorylation of Ser-406 of the pSXXF motif by ATM or ATR constitutes a specific recognition motif for the BRCT domain of BRCA1. Ionizing radiation promotes rapid phosphorylation at Ser-404 and Ser-406 by ATM; this promotes recruitment of BRCA1 to sites of DNA damage.

Its subcellular location is the nucleus. Functionally, involved in DNA damage response and double-strand break (DSB) repair. Component of the BRCA1-A complex, acting as a central scaffold protein that assembles the various components of the complex and mediates the recruitment of BRCA1. The BRCA1-A complex specifically recognizes 'Lys-63'-linked ubiquitinated histones H2A and H2AX at DNA lesion sites, leading to target the BRCA1-BARD1 heterodimer to sites of DNA damage at DSBs. This complex also possesses deubiquitinase activity that specifically removes 'Lys-63'-linked ubiquitin on histones H2A and H2AX. In Homo sapiens (Human), this protein is BRCA1-A complex subunit Abraxas 1.